Here is a 121-residue protein sequence, read N- to C-terminus: Small ribosomal subunit protein uS13 (121 aa).

Positions 94–121 are disordered; that stretch reads GLPVRGQNTKNNSRTRKGPRRTVANKKK. Positions 106–121 are enriched in basic residues; it reads SRTRKGPRRTVANKKK.

This sequence belongs to the universal ribosomal protein uS13 family. As to quaternary structure, part of the 30S ribosomal subunit. Forms a loose heterodimer with protein S19. Forms two bridges to the 50S subunit in the 70S ribosome.

Functionally, located at the top of the head of the 30S subunit, it contacts several helices of the 16S rRNA. In the 70S ribosome it contacts the 23S rRNA (bridge B1a) and protein L5 of the 50S subunit (bridge B1b), connecting the 2 subunits; these bridges are implicated in subunit movement. Contacts the tRNAs in the A and P-sites. This Exiguobacterium sibiricum (strain DSM 17290 / CCUG 55495 / CIP 109462 / JCM 13490 / 255-15) protein is Small ribosomal subunit protein uS13.